Here is a 648-residue protein sequence, read N- to C-terminus: Solute carrier family 23 member 2 (648 aa).

The tract at residues 1-21 is disordered; it reads MMGIGKNTASKSVEAGGSTEG. The Cytoplasmic segment spans residues 9–110; that stretch reads ASKSVEAGGS…LCIFLGLQHY (102 aa). Serine 70 carries the post-translational modification Phosphoserine. Position 75 is a phosphothreonine (threonine 75). At serine 78 the chain carries Phosphoserine. Threonine 79 carries the phosphothreonine modification. Serine 81 is modified (phosphoserine). The chain crosses the membrane as a helical span at residues 111–131; sequence LTCFSGTIAVPFLLADAMCVG. The Extracellular portion of the chain corresponds to 132 to 139; the sequence is DDQWATSQ. The helical transmembrane segment at 140–160 threads the bilayer; the sequence is LIGTIFFCVGITTLLQTTFGC. A topological domain (cytoplasmic) is located at residue arginine 161. The chain crosses the membrane as a helical span at residues 162–182; the sequence is LPLFQASAFAFLAPARAILSL. Over 183-216 the chain is Extracellular; the sequence is DKWKCNTTEITVANGTAELLEHIWHPRIQEIQGA. 2 N-linked (GlcNAc...) asparagine glycosylation sites follow: asparagine 188 and asparagine 196. A helical membrane pass occupies residues 217–237; the sequence is IIMSSLIEVVIGLLGLPGALL. At 238-264 the chain is on the cytoplasmic side; sequence RYIGPLTITPTVALIGLSGFQAAGERA. A helical transmembrane segment spans residues 265–282; that stretch reads GKHWGIAMLTIFLVLLFS. Residues 283 to 286 are Extracellular-facing; that stretch reads QYAR. Residues 287–300 constitute an intramembrane region (helical); it reads NVKFPLPIYKSKKG. Residues 301-307 are Extracellular-facing; sequence WTAYKFQ. The helical transmembrane segment at 308 to 328 threads the bilayer; the sequence is LFKMFPIILAILVSWLLCFIF. Residues 329–369 lie on the Cytoplasmic side of the membrane; the sequence is TVTDVFPSNSTDYGYYARTDARKGVLLVAPWFKVPYPFQWG. Residues 370-390 form a helical membrane-spanning segment; sequence MPTVSAAGVIGMLSAVVASII. Residues 391-415 lie on the Extracellular side of the membrane; sequence ESIGDYYACARLSCAPPPPIHAINR. A helical transmembrane segment spans residues 416–436; the sequence is GIFVEGLSCVLDGIFGTGNGS. At 437 to 459 the chain is on the cytoplasmic side; the sequence is TSSSPNIGVLGITKVGSRRVIQY. Residues 460 to 480 form a helical membrane-spanning segment; the sequence is GAALMLGLGMVGKFSALFASL. At 481-483 the chain is on the extracellular side; it reads PDP. A helical transmembrane segment spans residues 484 to 504; it reads VLGALFCTLFGMITAVGLSNL. At 505 to 514 the chain is on the cytoplasmic side; the sequence is QFIDLNSSRN. A helical membrane pass occupies residues 515 to 535; sequence LFVLGFSIFFGLVLPSYLRQN. At 536 to 545 the chain is on the extracellular side; that stretch reads PLVTGITGID. The chain crosses the membrane as a helical span at residues 546–566; that stretch reads QILNVLLTTAMFVGGCVAFIL. Over 567-648 the chain is Cytoplasmic; that stretch reads DNTIPGTPEE…SSDKDSQATV (82 aa). At threonine 647 the chain carries Phosphothreonine.

This sequence belongs to the nucleobase:cation symporter-2 (NCS2) (TC 2.A.40) family. Interacts with CLSTN3. Post-translationally, phosphorylated. In terms of tissue distribution, expressed in metabolically active and specialized tissues, including high expression in brain and adrenals. Detected in a wide range of tissues. Expression in kidney is almost undetectable.

It is found in the cell membrane. The catalysed reaction is L-ascorbate(out) + 2 Na(+)(out) = L-ascorbate(in) + 2 Na(+)(in). Its function is as follows. Sodium/ascorbate cotransporter. Mediates electrogenic uptake of vitamin C, with a stoichiometry of 2 Na(+) for each ascorbate. The chain is Solute carrier family 23 member 2 (Slc23a2) from Mus musculus (Mouse).